We begin with the raw amino-acid sequence, 359 residues long: Serpentine receptor class epsilon-33 (359 aa).

The next 7 helical transmembrane spans lie at V29–S49, I65–I85, Y134–I156, P168–F188, L194–V214, L255–Y275, and L285–I305.

This sequence belongs to the nematode receptor-like protein sre family.

It is found in the membrane. The protein is Serpentine receptor class epsilon-33 (sre-33) of Caenorhabditis elegans.